The sequence spans 189 residues: B3 domain-containing protein At2g32645 (189 aa).

Residues 33 to 133 (FNQVKTPDFL…KLCFALTPKI (101 aa)) constitute a DNA-binding region (TF-B3).

Its subcellular location is the nucleus. The sequence is that of B3 domain-containing protein At2g32645 from Arabidopsis thaliana (Mouse-ear cress).